The sequence spans 525 residues: Frizzled-4 (525 aa).

The N-terminal stretch at 1 to 24 (MERRGGGGRMLALLLAGLLGGARG) is a signal peptide. The Extracellular segment spans residues 25–200 (FGDEEERRCD…KCGYDAGLYS (176 aa)). In terms of domain architecture, FZ spans 28 to 149 (EEERRCDAIR…NDHNHMCMEG (122 aa)). 8 disulfide bridges follow: Cys-33/Cys-94, Cys-41/Cys-87, Cys-78/Cys-116, Cys-105/Cys-146, Cys-109/Cys-133, Cys-169/Cys-188, Cys-192/Cys-270, and Cys-290/Cys-365. N-linked (GlcNAc...) asparagine glycosylation is present at Asn-47. N-linked (GlcNAc...) asparagine glycosylation occurs at Asn-132. A helical transmembrane segment spans residues 201-231 (RSAKEFTDIWMAVWASLCFISTAFTVLTFLI). The Cytoplasmic segment spans residues 232-237 (DSSRFS). A helical membrane pass occupies residues 238–263 (YPERPIIFLSMCYNIYSIAYIVRLTV). The Extracellular segment spans residues 264–287 (GRERISCDFEEAAEPVLIQEGLKN). Residues 288–321 (TGCAIIFLLMYFFGMASSIWWVILTLTWFLAAGL) traverse the membrane as a helical segment. Residues 322-324 (KWG) are Cytoplasmic-facing. The helical transmembrane segment at 325 to 353 (HEAIEMHSSYFHIAAWAIPAVKTIVILIM) threads the bilayer. Topologically, residues 354–371 (RLVDADELTGLCYVGNQN) are extracellular. A helical membrane pass occupies residues 372 to 406 (LDALTGFVVAPLFTYLVIGTLFIAAGLVALFKIRS). Residues 407–419 (NLQKDGTKTDKLE) are Cytoplasmic-facing. Residues 420–448 (RLMVKIGVFSVLYTVPATCVIACYFYEIS) form a helical membrane-spanning segment. Topologically, residues 449–461 (NWAVFRYSADDSN) are extracellular. The helical transmembrane segment at 462–483 (MAVEMLKIFMSLLVGITSGMWI) threads the bilayer. Over 484–525 (WSAKTLHTWQKCSNRLVNSGKVKREKRADGWVKPGKGNETVV) the chain is Cytoplasmic. The short motif at 487–492 (KTLHTW) is the Lys-Thr-X-X-X-Trp motif, mediates interaction with the PDZ domain of Dvl family members element. Residues 523–525 (TVV) carry the PDZ-binding motif.

Belongs to the G-protein coupled receptor Fz/Smo family. As to quaternary structure, interacts (via FZ domain) with TSKU; TSKU competes with WNT2B for binding to FZD4, inhibiting Wnt signaling and repressing peripheral eye development. Expressed in the developing kidney, interdigital spaces and optic cup.

Its subcellular location is the cell membrane. Receptor for Wnt proteins. Most frizzled receptors are coupled to the beta-catenin canonical signaling pathway, which leads to the activation of disheveled proteins, inhibition of GSK-3 kinase, nuclear accumulation of beta-catenin and activation of Wnt target genes. A second signaling pathway involving PKC and calcium fluxes has been seen for some family members, but it is not yet clear if it represents a distinct pathway or if it can be integrated in the canonical pathway, as PKC seems to be required for Wnt-mediated inactivation of GSK-3 kinase. Both pathways seem to involve interactions with G-proteins. May be involved in transduction and intercellular transmission of polarity information during tissue morphogenesis and/or in differentiated tissues. The protein is Frizzled-4 (FZD4) of Gallus gallus (Chicken).